A 154-amino-acid chain; its full sequence is Myoglobin (154 aa).

The Globin domain maps to 2–148 (GLSDGEWHLV…FRNDIAAKIK (147 aa)). Ser-4 carries the phosphoserine modification. His-65 lines the nitrite pocket. His-65 provides a ligand contact to O2. At Thr-68 the chain carries Phosphothreonine. His-94 provides a ligand contact to heme b.

It belongs to the globin family. Monomeric.

It localises to the cytoplasm. Its subcellular location is the sarcoplasm. It catalyses the reaction Fe(III)-heme b-[protein] + nitric oxide + H2O = Fe(II)-heme b-[protein] + nitrite + 2 H(+). The catalysed reaction is H2O2 + AH2 = A + 2 H2O. Monomeric heme protein which primary function is to store oxygen and facilitate its diffusion within muscle tissues. Reversibly binds oxygen through a pentacoordinated heme iron and enables its timely and efficient release as needed during periods of heightened demand. Depending on the oxidative conditions of tissues and cells, and in addition to its ability to bind oxygen, it also has a nitrite reductase activity whereby it regulates the production of bioactive nitric oxide. Under stress conditions, like hypoxia and anoxia, it also protects cells against reactive oxygen species thanks to its pseudoperoxidase activity. The sequence is that of Myoglobin (MB) from Pusa sibirica (Baikal seal).